Reading from the N-terminus, the 320-residue chain is Cytochrome f (320 aa).

An N-terminal signal peptide occupies residues 1 to 35 (MQTRNAFSWLKKQITRSISVSLMIYILTRTSISSA). Heme-binding residues include Tyr36, Cys56, Cys59, and His60. The helical transmembrane segment at 286–306 (VQGLLFFLASVILAQIFLVLK) threads the bilayer.

Belongs to the cytochrome f family. As to quaternary structure, the 4 large subunits of the cytochrome b6-f complex are cytochrome b6, subunit IV (17 kDa polypeptide, petD), cytochrome f and the Rieske protein, while the 4 small subunits are PetG, PetL, PetM and PetN. The complex functions as a dimer. Heme serves as cofactor.

It is found in the plastid. It localises to the chloroplast thylakoid membrane. Functionally, component of the cytochrome b6-f complex, which mediates electron transfer between photosystem II (PSII) and photosystem I (PSI), cyclic electron flow around PSI, and state transitions. This Solanum bulbocastanum (Wild potato) protein is Cytochrome f.